The sequence spans 352 residues: Inhibin beta C chain (352 aa).

The first 18 residues, 1 to 18 (MTSSLLLAFLLLAPTTVA), serve as a signal peptide directing secretion. Positions 19–236 (TPRAGGQCPA…VGGKHQIHRR (218 aa)) are excised as a propeptide. Asn110, Asn143, and Asn161 each carry an N-linked (GlcNAc...) asparagine glycan. Disulfide bonds link Cys240/Cys248, Cys247/Cys317, Cys276/Cys349, and Cys280/Cys351.

The protein belongs to the TGF-beta family. In terms of assembly, homodimeric or heterodimeric through association with alpha and beta subunits, linked by one or more disulfide bonds. Inhibins are heterodimers of one alpha and one beta subunit. Activins are homo- or heterodimers of beta subunits only. Expressed in benign prostatic hyperplasia.

The protein resides in the secreted. Inhibins and activins inhibit and activate, respectively, the secretion of follitropin by the pituitary gland. Inhibins/activins are involved in regulating a number of diverse functions such as hypothalamic and pituitary hormone secretion, gonadal hormone secretion, germ cell development and maturation, erythroid differentiation, insulin secretion, nerve cell survival, embryonic axial development or bone growth, depending on their subunit composition. Inhibins appear to oppose the functions of activins. The chain is Inhibin beta C chain (INHBC) from Homo sapiens (Human).